The chain runs to 334 residues: Probable fructose-bisphosphate aldolase class 1 (334 aa).

This sequence belongs to the class I fructose-bisphosphate aldolase family.

The enzyme catalyses beta-D-fructose 1,6-bisphosphate = D-glyceraldehyde 3-phosphate + dihydroxyacetone phosphate. The protein operates within carbohydrate degradation; glycolysis; D-glyceraldehyde 3-phosphate and glycerone phosphate from D-glucose: step 4/4. This is Probable fructose-bisphosphate aldolase class 1 from Xylella fastidiosa (strain Temecula1 / ATCC 700964).